Reading from the N-terminus, the 404-residue chain is Caspase b (404 aa).

Positions 1–171 are excised as a propeptide; the sequence is MEDITQLLSD…DIYTPRSGTQ (171 aa). The region spanning 8–80 is the Pyrin domain; the sequence is LSDVLEDLVE…LRKIKQNERA (73 aa). Catalysis depends on residues histidine 249 and cysteine 296. Residues 301–316 constitute a propeptide that is removed on maturation; sequence SSGVLAQDSVFASDSW.

It belongs to the peptidase C14A family. Upon direct LPS-binding, forms large homooligomers, resulting in its activation. These oligomers are often referred to as 'non-canonical inflammasomes'. Heterotetramer that consists of two anti-parallel arranged heterodimers, each one formed by a 20 kDa (p20) and a 10 kDa (p10) subunit. Interacts with caspa. Interacts with pycard; the interaction only occurs in the presence of nlrp1. Component of NLRP1 inflammasomes. Inflammasomes are supramolecular complexes that assemble in the cytosol in response to pathogens and other damage-associated signals and play critical roles in innate immunity and inflammation. The NLRP1 inflammasome is composed of the signal sensor nlrp1, and the adapter pycard (asc), which recruit effector pro-inflammatory caspases caspa and/or caspb. The interaction between nlrp1 and pycard is required for the sequential recruitment of caspa and then caspb. Caspa is preferentially recruited first and this causes the cleavage of pro-il1b into the midformed il1b. This is followed by the recruitment of caspb, which is activated and cleaves the midformed il1b resulting in il1b maturation. The two subunits are derived from the precursor sequence by an autocatalytic mechanism. Expressed in the spleen, kidney and liver, and highly expressed in the gills and gut.

It localises to the inflammasome. The protein resides in the cytoplasm. The enzyme catalyses Strict requirement for Asp at the P1 position. It has a preferred cleavage sequence of Tyr-Val-Ala-Asp-|- but also cleaves at Asp-Glu-Val-Asp-|-.. With respect to regulation, activated by homooligomerization induced by direct binding to cytosolic LPS. Its function is as follows. Thiol protease which cleaves IL-1 beta (il1b), releasing the mature cytokine which is involved in a variety of inflammatory processes, and mediates apoptosis. Component of the NLRP1 inflammasome, which plays a crucial role in innate immunity and inflammation. In response to pathogens and other damage-associated signals, recruited to the NLRP1 inflammasome in its precursor form following the recruitment of caspase caspa. Its subsequent activation causes the cleavage of the midformed pro-il1b and results in il1b maturation and secretion in the extracellular milieu. Activated by direct binding to bacterial lipopolysaccharides (LPS), which causes non-canonical inflammasome activation and results in the pyroptosis of infected cells and their extrusion into the gut lumen, as well as in cytokine secretion. Plays a crucial role in the restriction of bacterial infection to intestinal sites. Pyroptosis limits bacterial replication, while cytokine secretion promotes the recruitment and activation of immune cells and triggers mucosal inflammation. Promotes pyroptosis by bacterial infection by E.piscicida. The polypeptide is Caspase b (Danio rerio (Zebrafish)).